Reading from the N-terminus, the 303-residue chain is tRNA dimethylallyltransferase (303 aa).

9 to 16 provides a ligand contact to ATP; it reads GPTASGKS. A substrate-binding site is contributed by 11-16; that stretch reads TASGKS. The interaction with substrate tRNA stretch occupies residues 34-37; that stretch reads DSKQ.

It belongs to the IPP transferase family. As to quaternary structure, monomer. Mg(2+) serves as cofactor.

It catalyses the reaction adenosine(37) in tRNA + dimethylallyl diphosphate = N(6)-dimethylallyladenosine(37) in tRNA + diphosphate. Its function is as follows. Catalyzes the transfer of a dimethylallyl group onto the adenine at position 37 in tRNAs that read codons beginning with uridine, leading to the formation of N6-(dimethylallyl)adenosine (i(6)A). The chain is tRNA dimethylallyltransferase from Ehrlichia chaffeensis (strain ATCC CRL-10679 / Arkansas).